The primary structure comprises 157 residues: GYLGGYAGYAAAPAAYAAAPAAYAAPAYAAPAVVKTAYAAPAIVKAAAPAVDYYSYPKYAFEYGVNDPHTGDVKRQWEERDGDVVRGEYSLLEPDGTTRTVTYTADAHNGFNAVVHRSGPSAHPAPAPAVAVPAVAKYVAAAPAVVKSVGYGGYGYH.

Repeat copies occupy residues 11-14 (AAPA), 18-21 (AAPA), 24-27 (AAPA), 29-32 (AAPA), 39-42 (AAPA), and 47-50 (AAPA). One can recognise a Chitin-binding type R&amp;R domain in the interval 56 to 127 (YPKYAFEYGV…SGPSAHPAPA (72 aa)). Copy 7 of the repeat occupies 141–144 (AAPA).

Functionally, component of the cuticle of migratory locust which contains more than 100 different structural proteins. The sequence is that of Cuticle protein 19 from Locusta migratoria (Migratory locust).